Reading from the N-terminus, the 51-residue chain is Ribosome biogenesis protein Nop10 (51 aa).

Belongs to the NOP10 family.

In terms of biological role, involved in ribosome biogenesis; more specifically in 18S rRNA pseudouridylation and in cleavage of pre-rRNA. This is Ribosome biogenesis protein Nop10 from Methanococcus maripaludis (strain C5 / ATCC BAA-1333).